Reading from the N-terminus, the 772-residue chain is Ribosomal protein S6 kinase alpha-4 (772 aa).

Residues 33–301 form the Protein kinase 1 domain; it reads FELLKVLGTG…AQEVRNHPFF (269 aa). ATP is bound by residues 39 to 47 and Lys-65; that span reads LGTGAYGKV. The Proton acceptor role is filled by Asp-161. Residue Ser-196 is modified to Phosphoserine; by autocatalysis. Positions 302–371 constitute an AGC-kinase C-terminal domain; that stretch reads QGLDWVALAA…VAPSILFDHN (70 aa). Ser-343 is subject to Phosphoserine; by MAPK1, MAPK3 and MAPK14. The residue at position 347 (Ser-347) is a Phosphoserine. Ser-360 and Ser-365 each carry phosphoserine; by autocatalysis. Residues 411–674 form the Protein kinase 2 domain; sequence DLREPALGQG…LEGLRGSSWL (264 aa). ATP is bound by residues 417-425 and Lys-440; that span reads LGQGSFSVC. Asp-530 acts as the Proton acceptor in catalysis. The residue at position 542 (Thr-542) is a Phosphothreonine. Thr-568 is subject to Phosphothreonine; by MAPK1, MAPK3 and MAPK14. Phosphoserine occurs at positions 634 and 678. Disordered regions lie at residues 673 to 696 and 728 to 772; these read WLQDGSARSSPPLRTPDVLESSGP and AKRR…LPPS. Thr-687 is subject to Phosphothreonine. Residues 725 to 772 are required for nuclear targeting and association with MAPK14; the sequence is APLAKRRKQKLRSATASRRGSPAPANPGRAPVASKGAPRRANGPLPPS. Ser-737 is modified (phosphoserine; by autocatalysis). Ser-745 is modified (phosphoserine).

Belongs to the protein kinase superfamily. AGC Ser/Thr protein kinase family. S6 kinase subfamily. Forms a complex with either MAPK1/ERK2 or MAPK3/ERK1 in quiescent cells which transiently dissociates following mitogenic stimulation. Also associates with MAPK14/p38-alpha. Activated RPS6KA4 associates with and phosphorylates the NF-kappa-B p65 subunit RELA. Requires Mg(2+) as cofactor. Ser-343 and Thr-568 phosphorylation is required for kinase activity. Ser-343 and Ser-196 are autophosphorylated by the C-terminal kinase domain, and their phosphorylation is essential for the catalytic activity of the N-terminal kinase domain. Phosphorylated at Ser-343, Thr-568 and Thr-687 by MAPK1/ERK2, MAPK3/ERK1 and MAPK14/p38-alpha. Autophosphorylated at Ser-737 and Ser-745 by the N-terminal kinase domain.

The protein localises to the nucleus. It carries out the reaction L-seryl-[protein] + ATP = O-phospho-L-seryl-[protein] + ADP + H(+). The catalysed reaction is L-threonyl-[protein] + ATP = O-phospho-L-threonyl-[protein] + ADP + H(+). Activated by phosphorylation at Ser-343, Thr-568 and Thr-687 by MAPK1/ERK2, MAPK3/ERK1 and MAPK14/p38-alpha, and by further autophosphorylation of Ser-196, Ser-360 and Ser-365 by the activated C-terminal kinase domain. Its function is as follows. Serine/threonine-protein kinase that is required for the mitogen or stress-induced phosphorylation of the transcription factors CREB1 and ATF1 and for the regulation of the transcription factor RELA, and that contributes to gene activation by histone phosphorylation and functions in the regulation of inflammatory genes. Phosphorylates CREB1 and ATF1 in response to mitogenic or stress stimuli such as UV-C irradiation, epidermal growth factor (EGF) and anisomycin. Plays an essential role in the control of RELA transcriptional activity in response to TNF. Phosphorylates 'Ser-10' of histone H3 in response to mitogenics, stress stimuli and EGF, which results in the transcriptional activation of several immediate early genes, including proto-oncogenes c-fos/FOS and c-jun/JUN. May also phosphorylate 'Ser-28' of histone H3. Mediates the mitogen- and stress-induced phosphorylation of high mobility group protein 1 (HMGN1/HMG14). In lipopolysaccharide-stimulated primary macrophages, acts downstream of the Toll-like receptor TLR4 to limit the production of pro-inflammatory cytokines. Functions probably by inducing transcription of the MAP kinase phosphatase DUSP1 and the anti-inflammatory cytokine interleukin 10 (IL10), via CREB1 and ATF1 transcription factors. The protein is Ribosomal protein S6 kinase alpha-4 (RPS6KA4) of Homo sapiens (Human).